A 200-amino-acid polypeptide reads, in one-letter code: Recombination protein RecR (200 aa).

Residues 57–72 form a C4-type zinc finger; sequence CQECRTFTEQDVCHIC. The Toprim domain occupies 81–176; it reads GQLCVVESPA…TASRIAHGVP (96 aa).

This sequence belongs to the RecR family.

Its function is as follows. May play a role in DNA repair. It seems to be involved in an RecBC-independent recombinational process of DNA repair. It may act with RecF and RecO. The polypeptide is Recombination protein RecR (Vibrio cholerae serotype O1 (strain ATCC 39541 / Classical Ogawa 395 / O395)).